The chain runs to 268 residues: Tryptophan synthase alpha chain (268 aa).

Residues Glu-49 and Asp-60 each act as proton acceptor in the active site.

Belongs to the TrpA family. As to quaternary structure, tetramer of two alpha and two beta chains.

It carries out the reaction (1S,2R)-1-C-(indol-3-yl)glycerol 3-phosphate + L-serine = D-glyceraldehyde 3-phosphate + L-tryptophan + H2O. It participates in amino-acid biosynthesis; L-tryptophan biosynthesis; L-tryptophan from chorismate: step 5/5. Its function is as follows. The alpha subunit is responsible for the aldol cleavage of indoleglycerol phosphate to indole and glyceraldehyde 3-phosphate. This Pseudomonas aeruginosa (strain LESB58) protein is Tryptophan synthase alpha chain.